A 338-amino-acid polypeptide reads, in one-letter code: MSITRRTTLSKYLIEQQRETHNLPADLRLLIEVVARACKAISYNVSKGALGDALGTAGSENVQGEVQKKLDILSNEILLDANEWGGNLAAMASEEMETFFPIPANYPRGEYLLVFDPLDGSSNIDVNVSIGTIFSVLRCPDGQQATEQSFLQPGTEQVAAGYAVYGPQTVFVLTTGNGVNCFTLDREVGSWVLTQSNLRIPEDTREYAINASNARHWYDPVKRYVDELNAGAEGPRGENFNMRWIASMVADVHRILNRGGIFMYPADKRTPDRPGKLRLMYEANPMSFIVEQAGGAATTGLKRILDVQPTGLHQRVPVILGSKNEVERVARYHQEAQS.

Residues Glu94, Asp116, Leu118, and Asp119 each coordinate Mg(2+). Residues 119–122 (DGSS), Asn210, and Lys276 contribute to the substrate site. A Mg(2+)-binding site is contributed by Glu282.

This sequence belongs to the FBPase class 1 family. As to quaternary structure, homotetramer. Requires Mg(2+) as cofactor.

It localises to the cytoplasm. It carries out the reaction beta-D-fructose 1,6-bisphosphate + H2O = beta-D-fructose 6-phosphate + phosphate. Its pathway is carbohydrate biosynthesis; gluconeogenesis. The chain is Fructose-1,6-bisphosphatase class 1 from Burkholderia thailandensis (strain ATCC 700388 / DSM 13276 / CCUG 48851 / CIP 106301 / E264).